The following is a 251-amino-acid chain: Copper transport protein CTR1 (251 aa).

The helical transmembrane segment at 90 to 110 (AFGIFVLLFFVAFLARMLEFV) threads the bilayer. Residues 157 to 173 (DESIDKQNSPQHEETTK) are compositionally biased toward basic and acidic residues. Residues 157-176 (DESIDKQNSPQHEETTKARG) are disordered. Residues 208–228 (MLAAMTYTLTYFFAVVIGSGV) traverse the membrane as a helical segment.

As to quaternary structure, oligomer.

Its subcellular location is the cell membrane. Its function is as follows. Required for high affinity copper (probably reduced Cu I) transport into the cell. This Candida albicans (strain SC5314 / ATCC MYA-2876) (Yeast) protein is Copper transport protein CTR1 (CTR1).